A 242-amino-acid chain; its full sequence is MNYTLFVGDLHLSADRPDILNAFHQFLDQDASHCDALYILGDLFEVWVGDDIAEPFALELAERLKRFSTHTPIYFIHGNRDFLLGKEYAKRSGMTLLPEIYSIDLYGEPSVLLHGDSLCTLDKAYQRFRRFRNMAWAKFIYNHLPKSKRIAIADKLRSKSKQSNQIKSYSIMDVEQSAVEQLMAETGAKRMIHGHTHRPDIHRLANDTQRIVVGDWYEQGSVLKISPKEVNLQSLPFGETEA.

Mn(2+)-binding residues include aspartate 9, histidine 11, aspartate 42, asparagine 79, and histidine 114. 79–80 (NR) is a substrate binding site. Positions 122, 160, 164, 167, and 195 each coordinate substrate. Mn(2+) contacts are provided by histidine 195 and histidine 197.

The protein belongs to the LpxH family. Requires Mn(2+) as cofactor.

It is found in the cell inner membrane. It catalyses the reaction UDP-2-N,3-O-bis[(3R)-3-hydroxytetradecanoyl]-alpha-D-glucosamine + H2O = 2-N,3-O-bis[(3R)-3-hydroxytetradecanoyl]-alpha-D-glucosaminyl 1-phosphate + UMP + 2 H(+). The protein operates within glycolipid biosynthesis; lipid IV(A) biosynthesis; lipid IV(A) from (3R)-3-hydroxytetradecanoyl-[acyl-carrier-protein] and UDP-N-acetyl-alpha-D-glucosamine: step 4/6. Functionally, hydrolyzes the pyrophosphate bond of UDP-2,3-diacylglucosamine to yield 2,3-diacylglucosamine 1-phosphate (lipid X) and UMP by catalyzing the attack of water at the alpha-P atom. Involved in the biosynthesis of lipid A, a phosphorylated glycolipid that anchors the lipopolysaccharide to the outer membrane of the cell. The polypeptide is UDP-2,3-diacylglucosamine hydrolase (Shewanella loihica (strain ATCC BAA-1088 / PV-4)).